A 357-amino-acid polypeptide reads, in one-letter code: Protein-glutamate methylesterase/protein-glutamine glutaminase 1 (357 aa).

Residues 10–127 enclose the Response regulatory domain; that stretch reads RTLIVDDSAF…DVNKIEKELV (118 aa). Asp-61 carries the 4-aspartylphosphate modification. One can recognise a CheB-type methylesterase domain in the interval 159–353; sequence SCAGDFAVLI…EEIVRMSEVK (195 aa). Active-site residues include Ser-171, His-198, and Asp-295.

It belongs to the CheB family. In terms of processing, phosphorylated by CheA. Phosphorylation of the N-terminal regulatory domain activates the methylesterase activity.

It is found in the cytoplasm. It carries out the reaction [protein]-L-glutamate 5-O-methyl ester + H2O = L-glutamyl-[protein] + methanol + H(+). The catalysed reaction is L-glutaminyl-[protein] + H2O = L-glutamyl-[protein] + NH4(+). In terms of biological role, involved in chemotaxis. Part of a chemotaxis signal transduction system that modulates chemotaxis in response to various stimuli. Catalyzes the demethylation of specific methylglutamate residues introduced into the chemoreceptors (methyl-accepting chemotaxis proteins or MCP) by CheR. Also mediates the irreversible deamidation of specific glutamine residues to glutamic acid. The sequence is that of Protein-glutamate methylesterase/protein-glutamine glutaminase 1 from Methanosarcina mazei (strain ATCC BAA-159 / DSM 3647 / Goe1 / Go1 / JCM 11833 / OCM 88) (Methanosarcina frisia).